A 128-amino-acid chain; its full sequence is Fluoride-specific ion channel FluC (128 aa).

Helical transmembrane passes span 4-24 (VFLLIIGGAIGSALRFGVSTW), 35-55 (FGILSVNVIGSFLIGFCWSIA), 67-87 (FLFTGLFGGFTTFSSFALDTM), and 99-119 (LLNVLASNILGLIAVFLGIIL). Residues Gly74 and Thr77 each contribute to the Na(+) site.

The protein belongs to the fluoride channel Fluc/FEX (TC 1.A.43) family.

The protein localises to the cell inner membrane. The catalysed reaction is fluoride(in) = fluoride(out). With respect to regulation, na(+) is not transported, but it plays an essential structural role and its presence is essential for fluoride channel function. Fluoride-specific ion channel. Important for reducing fluoride concentration in the cell, thus reducing its toxicity. This Parabacteroides distasonis (strain ATCC 8503 / DSM 20701 / CIP 104284 / JCM 5825 / NCTC 11152) protein is Fluoride-specific ion channel FluC.